Reading from the N-terminus, the 1223-residue chain is Rho family-interacting cell polarization regulator 1 (1223 aa).

A Phosphoserine modification is found at Ser-22. Positions 89-114 form a coiled coil; the sequence is LTAYLEVHQQEQEKLQGQIRESKRNS. A phosphoserine mark is found at Ser-349 and Ser-351. Thr-355 is subject to Phosphothreonine. Residues 375-411 form a disordered region; the sequence is NGTAWSLSSESSDDSSSPQLSGTARHSPAPRPLVQQP. Over residues 380–395 the composition is skewed to low complexity; the sequence is SLSSESSDDSSSPQLS. 2 positions are modified to phosphoserine: Ser-456 and Ser-459. Disordered regions lie at residues 475–769 and 856–889; these read ESLA…APQH and FLNE…SPSA. Composition is skewed to low complexity over residues 505–523 and 546–564; these read GHSA…PTST and PGPT…TTTH. A compositionally biased stretch (polar residues) spans 565–592; that stretch reads SAPSPLTHTTTGSTHKPIISTLTTTGPT. 2 stretches are compositionally biased toward low complexity: residues 601–650 and 659–675; these read TTTS…PTPS and TSPT…TTSP. Residues 680 to 695 show a composition bias toward polar residues; it reads VSPSTSLELATLSSPS. The segment covering 858-867 has biased composition (acidic residues); it reads NEDEDEDNDV. Ser-874 and Ser-875 each carry phosphoserine.

It belongs to the RIPOR family. Interacts (via N-terminus) with RHOA (GTP-bound form); this interaction links active RHOA to STK24 and STK26 kinases. Interacts with RHOB. Interacts with RHOC. Interacts (via C-terminus) with PDCD10; this interaction occurs in a Rho-independent manner. Interacts (via C-terminus) with STK24; this interaction occurs in a PDCD10-dependent and Rho-independent manner. Interacts (via C-terminus) with STK26; this interaction occurs in a PDCD10-dependent and Rho-independent manner. Interacts (via N-terminus) with 14-3-3 proteins; these interactions occur in a Rho-dependent manner.

It is found in the cytoplasm. The protein resides in the golgi apparatus. Its function is as follows. Downstream effector protein for Rho-type small GTPases that plays a role in cell polarity and directional migration. Acts as an adapter protein, linking active Rho proteins to STK24 and STK26 kinases, and hence positively regulates Golgi reorientation in polarized cell migration upon Rho activation. Involved in the subcellular relocation of STK26 from the Golgi to cytoplasm punctae in a Rho- and PDCD10-dependent manner upon serum stimulation. This chain is Rho family-interacting cell polarization regulator 1 (RIPOR1), found in Homo sapiens (Human).